The chain runs to 237 residues: MAKEECKALLDALNKATACYHHLVLTIGGSADSQNLREELQKTRQKAQELAVAIRLRLTAPLRDRSLGAEERAEFERLWVAFSGCLDLLEADMRRALALSTEFPLQEPRRPLVRTGVEGGATGVAARALSVRSLRHEAHRDFDVEDLHQLEREILQVGEMIQDMEMKVNVPRWTVQARQAAGAELLSSASAGVSSVGGVSVEQRTGPCDLSKAKAATIFSAVLLAAVALAVCVAKLS.

Residues 1–214 (MAKEECKALL…TGPCDLSKAK (214 aa)) lie on the Cytoplasmic side of the membrane. Coiled coils occupy residues 29–58 (GSAD…RLRL) and 144–169 (VEDL…MKVN). The interval 153 to 202 (EILQVGEMIQDMEMKVNVPRWTVQARQAAGAELLSSASAGVSSVGGVSVE) is SNARE-like. Residues 215 to 234 (AATIFSAVLLAAVALAVCVA) form a helical; Anchor for type IV membrane protein membrane-spanning segment. The Extracellular portion of the chain corresponds to 235-237 (KLS).

This sequence belongs to the RGS7BP/RGS9BP family. Specifically interacts with isoform RGS9-1 of RGS9. Component of the RGS9-1-Gbeta5 complex composed of RGS9-1, Gbeta5 (GNB5) and RGS9BP. Specifically expressed in the retina. Only present in photoreceptors (at protein level).

It is found in the membrane. Its function is as follows. Regulator of G protein-coupled receptor (GPCR) signaling in phototransduction. Participates in the recovery phase of visual transduction via its interaction with RGS9-1 isoform. Acts as a membrane-anchor that mediates the targeting of RGS9-1 to the photoreceptor outer segment, where phototransduction takes place. Enhances the ability of RGS9-1 to stimulate G protein GTPase activity, allowing the visual signal to be terminated on the physiologically time scale. It also controls the proteolytic stability of RGS9-1, probably by protecting it from degradation. The polypeptide is Regulator of G-protein signaling 9-binding protein (RGS9BP) (Bos taurus (Bovine)).